We begin with the raw amino-acid sequence, 225 residues long: UPF0173 metal-dependent hydrolase Pars_0810 (225 aa).

This sequence belongs to the UPF0173 family.

This Pyrobaculum arsenaticum (strain DSM 13514 / JCM 11321 / PZ6) protein is UPF0173 metal-dependent hydrolase Pars_0810.